The chain runs to 322 residues: DNA repair and recombination protein RadA (322 aa).

105 to 112 is a binding site for ATP; that stretch reads GMYGSGKT.

Belongs to the eukaryotic RecA-like protein family.

Functionally, involved in DNA repair and in homologous recombination. Binds and assemble on single-stranded DNA to form a nucleoprotein filament. Hydrolyzes ATP in a ssDNA-dependent manner and promotes DNA strand exchange between homologous DNA molecules. The chain is DNA repair and recombination protein RadA from Methanococcus maripaludis (strain C7 / ATCC BAA-1331).